The sequence spans 474 residues: ATP synthase subunit beta (474 aa).

152 to 159 (GGAGVGKT) serves as a coordination point for ATP.

It belongs to the ATPase alpha/beta chains family. In terms of assembly, F-type ATPases have 2 components, CF(1) - the catalytic core - and CF(0) - the membrane proton channel. CF(1) has five subunits: alpha(3), beta(3), gamma(1), delta(1), epsilon(1). CF(0) has three main subunits: a(1), b(2) and c(9-12). The alpha and beta chains form an alternating ring which encloses part of the gamma chain. CF(1) is attached to CF(0) by a central stalk formed by the gamma and epsilon chains, while a peripheral stalk is formed by the delta and b chains.

The protein localises to the cell inner membrane. It carries out the reaction ATP + H2O + 4 H(+)(in) = ADP + phosphate + 5 H(+)(out). Produces ATP from ADP in the presence of a proton gradient across the membrane. The catalytic sites are hosted primarily by the beta subunits. The chain is ATP synthase subunit beta from Paramagnetospirillum magneticum (strain ATCC 700264 / AMB-1) (Magnetospirillum magneticum).